The primary structure comprises 264 residues: Ribosomal protein L11 methyltransferase (264 aa).

S-adenosyl-L-methionine is bound by residues threonine 116, glycine 137, aspartate 159, and asparagine 200.

It belongs to the methyltransferase superfamily. PrmA family.

The protein resides in the cytoplasm. The enzyme catalyses L-lysyl-[protein] + 3 S-adenosyl-L-methionine = N(6),N(6),N(6)-trimethyl-L-lysyl-[protein] + 3 S-adenosyl-L-homocysteine + 3 H(+). Its function is as follows. Methylates ribosomal protein L11. This is Ribosomal protein L11 methyltransferase from Thermotoga petrophila (strain ATCC BAA-488 / DSM 13995 / JCM 10881 / RKU-1).